We begin with the raw amino-acid sequence, 196 residues long: Ribonuclease HII (196 aa).

An RNase H type-2 domain is found at 1–196 (MVTIGVDEAG…FAPVAQLQLL (196 aa)). A divalent metal cation-binding residues include Asp-7, Glu-8, and Asp-103.

Belongs to the RNase HII family. Mn(2+) is required as a cofactor. Mg(2+) serves as cofactor.

It localises to the cytoplasm. The catalysed reaction is Endonucleolytic cleavage to 5'-phosphomonoester.. In terms of biological role, endonuclease that specifically degrades the RNA of RNA-DNA hybrids. The protein is Ribonuclease HII of Novosphingobium aromaticivorans (strain ATCC 700278 / DSM 12444 / CCUG 56034 / CIP 105152 / NBRC 16084 / F199).